The following is a 115-amino-acid chain: NADH-ubiquinone oxidoreductase chain 3 (115 aa).

3 consecutive transmembrane segments (helical) span residues 4 to 24 (ALTL…AFWL), 55 to 75 (FFLV…LLPL), and 84 to 104 (LTTM…SLAY).

Belongs to the complex I subunit 3 family. Core subunit of respiratory chain NADH dehydrogenase (Complex I) which is composed of 45 different subunits. Interacts with TMEM186. Interacts with TMEM242.

Its subcellular location is the mitochondrion inner membrane. The enzyme catalyses a ubiquinone + NADH + 5 H(+)(in) = a ubiquinol + NAD(+) + 4 H(+)(out). Its function is as follows. Core subunit of the mitochondrial membrane respiratory chain NADH dehydrogenase (Complex I) which catalyzes electron transfer from NADH through the respiratory chain, using ubiquinone as an electron acceptor. Essential for the catalytic activity of complex I. The sequence is that of NADH-ubiquinone oxidoreductase chain 3 from Halichoerus grypus (Gray seal).